The following is a 161-amino-acid chain: Putative pre-16S rRNA nuclease (161 aa).

The disordered stretch occupies residues 142–161 (AGSPPGALVPRNRVDPDRHA).

It belongs to the YqgF nuclease family.

It localises to the cytoplasm. Functionally, could be a nuclease involved in processing of the 5'-end of pre-16S rRNA. In Clavibacter sepedonicus (Clavibacter michiganensis subsp. sepedonicus), this protein is Putative pre-16S rRNA nuclease.